The primary structure comprises 77 residues: uncharacterized protein (77 aa).

This is an uncharacterized protein from Salmonella typhimurium (strain LT2 / SGSC1412 / ATCC 700720).